Consider the following 121-residue polypeptide: Small basic protein (121 aa).

The next 3 membrane-spanning stretches (helical) occupy residues 2–22 (WLPV…NLTI), 29–49 (YLSL…RAHL), and 57–77 (VFVS…FLGV).

This sequence belongs to the sbp family.

The protein resides in the cell membrane. The sequence is that of Small basic protein (sbp) from Bacillus subtilis (strain 168).